Reading from the N-terminus, the 102-residue chain is Small ribosomal subunit protein uS10 (102 aa).

It belongs to the universal ribosomal protein uS10 family. As to quaternary structure, part of the 30S ribosomal subunit.

Involved in the binding of tRNA to the ribosomes. In Mycoplasma mycoides subsp. mycoides SC (strain CCUG 32753 / NCTC 10114 / PG1), this protein is Small ribosomal subunit protein uS10.